Consider the following 463-residue polypeptide: Glutamate--tRNA ligase 2 (463 aa).

Positions 11–21 (PSPTGYLHIGG) match the 'HIGH' region motif. The 'KMSKS' region motif lies at 240–244 (KLSKR). An ATP-binding site is contributed by K243.

This sequence belongs to the class-I aminoacyl-tRNA synthetase family. Glutamate--tRNA ligase type 1 subfamily. As to quaternary structure, monomer.

Its subcellular location is the cytoplasm. The enzyme catalyses tRNA(Glu) + L-glutamate + ATP = L-glutamyl-tRNA(Glu) + AMP + diphosphate. Catalyzes the attachment of glutamate to tRNA(Glu) in a two-step reaction: glutamate is first activated by ATP to form Glu-AMP and then transferred to the acceptor end of tRNA(Glu). This Campylobacter jejuni subsp. jejuni serotype O:2 (strain ATCC 700819 / NCTC 11168) protein is Glutamate--tRNA ligase 2.